Here is a 230-residue protein sequence, read N- to C-terminus: Potassium/proton antiporter CemA (230 aa).

4 helical membrane-spanning segments follow: residues 7-27 (LPSFLYLVFIVLLPWGVSFSF), 106-126 (IILHFSTNIICLAILSGSFFL), 145-165 (LNDSIKAFFILLVTDFFVGFH), and 181-201 (LGWAPNELIFTIFVCSFPVIL).

It belongs to the CemA family.

The protein resides in the plastid. Its subcellular location is the chloroplast inner membrane. It carries out the reaction K(+)(in) + H(+)(out) = K(+)(out) + H(+)(in). Its function is as follows. Contributes to K(+)/H(+) antiport activity by supporting proton efflux to control proton extrusion and homeostasis in chloroplasts in a light-dependent manner to modulate photosynthesis. Prevents excessive induction of non-photochemical quenching (NPQ) under continuous-light conditions. Indirectly promotes efficient inorganic carbon uptake into chloroplasts. This is Potassium/proton antiporter CemA from Zea mays (Maize).